The sequence spans 326 residues: Putative UPF0725 protein At1g28500 (326 aa).

Over residues 301–320 (KDTEQRSKTRQSEEKVESSQ) the composition is skewed to basic and acidic residues. A disordered region spans residues 301–326 (KDTEQRSKTRQSEEKVESSQKRSRLC).

This sequence belongs to the UPF0725 (EMB2204) family.

The chain is Putative UPF0725 protein At1g28500 from Arabidopsis thaliana (Mouse-ear cress).